The sequence spans 188 residues: 3-deoxy-D-manno-octulosonate 8-phosphate phosphatase KdsC (188 aa).

Residues D32 and D34 each coordinate Mg(2+). Substrate-binding positions include D34, 55 to 59, R63, R78, R86, and K102; that span reads NVRDG. D125 lines the Mg(2+) pocket.

Homotetramer. The cofactor is Mg(2+). Co(2+) serves as cofactor.

It carries out the reaction 3-deoxy-alpha-D-manno-2-octulosonate-8-phosphate + H2O = 3-deoxy-alpha-D-manno-oct-2-ulosonate + phosphate. It participates in carbohydrate biosynthesis; 3-deoxy-D-manno-octulosonate biosynthesis; 3-deoxy-D-manno-octulosonate from D-ribulose 5-phosphate: step 3/3. It functions in the pathway bacterial outer membrane biogenesis; lipopolysaccharide biosynthesis. Inhibited by calcium, cadmium, mercury, and copper ions. Its function is as follows. Catalyzes the hydrolysis of 3-deoxy-D-manno-octulosonate 8-phosphate (KDO 8-P) to 3-deoxy-D-manno-octulosonate (KDO) and inorganic phosphate. This is 3-deoxy-D-manno-octulosonate 8-phosphate phosphatase KdsC from Escherichia coli (strain B / BL21-DE3).